Reading from the N-terminus, the 173-residue chain is Large ribosomal subunit protein uL5 (173 aa).

Belongs to the universal ribosomal protein uL5 family. In terms of assembly, component of the large ribosomal subunit.

It localises to the nucleus. The protein localises to the cytoplasm. Functionally, component of the ribosome, a large ribonucleoprotein complex responsible for the synthesis of proteins in the cell. The small ribosomal subunit (SSU) binds messenger RNAs (mRNAs) and translates the encoded message by selecting cognate aminoacyl-transfer RNA (tRNA) molecules. The large subunit (LSU) contains the ribosomal catalytic site termed the peptidyl transferase center (PTC), which catalyzes the formation of peptide bonds, thereby polymerizing the amino acids delivered by tRNAs into a polypeptide chain. The nascent polypeptides leave the ribosome through a tunnel in the LSU and interact with protein factors that function in enzymatic processing, targeting, and the membrane insertion of nascent chains at the exit of the ribosomal tunnel. This Encephalitozoon cuniculi (strain GB-M1) (Microsporidian parasite) protein is Large ribosomal subunit protein uL5 (RPL11).